We begin with the raw amino-acid sequence, 432 residues long: Zinc finger protein 829 (432 aa).

One can recognise a KRAB domain in the interval 35–106 (VMFRDVSIDF…DRELTRGLCS (72 aa)). The C2H2-type 1 zinc-finger motif lies at 156-178 (WECKICGKTFNQNSQFIQHQRIH). The C2H2-type 2; degenerate zinc-finger motif lies at 184 to 206 (YESKEYGKSFSRGSLVTRHQRIH). 8 C2H2-type zinc fingers span residues 212–234 (YECKECGKAFSCSSYFSQHQRIH), 240–262 (YECKECGKAFKYCSNLNDHQRIH), 268–290 (YECKVCGKAFTKSSQLFLHLRIH), 296–318 (YECKECGKAFTQHSRLIQHQRMH), 324–346 (YECKQCGKAFNSASTLTNHHRIH), 352–374 (YECEECRKAFIQSSELIQHQRIH), 380–402 (YECNECGKAFNKGSNLTRHQRIH), and 408–430 (YDCKECGKAFGSRSDLIRHEGIH).

It belongs to the krueppel C2H2-type zinc-finger protein family.

It is found in the nucleus. In terms of biological role, may be involved in transcriptional regulation. The protein is Zinc finger protein 829 (ZNF829) of Homo sapiens (Human).